The sequence spans 54 residues: Rubredoxin (54 aa).

Residues Ala2–Leu52 enclose the Rubredoxin-like domain. Positions 6, 9, 39, and 42 each coordinate Fe cation.

It belongs to the rubredoxin family. Requires Fe(3+) as cofactor.

Functionally, rubredoxin is a small nonheme, iron protein lacking acid-labile sulfide. Its single Fe, chelated to 4 Cys, functions as an electron acceptor and may also stabilize the conformation of the molecule. The protein is Rubredoxin (rub) of Pyrococcus furiosus (strain ATCC 43587 / DSM 3638 / JCM 8422 / Vc1).